The chain runs to 527 residues: Peptide chain release factor 3 (527 aa).

The tr-type G domain maps to 9–278; it reads NKRRTFAIIS…GLTQWAPKPQ (270 aa). Residues 18–25, 86–90, and 140–143 contribute to the GTP site; these read SHPDAGKT, DTPGH, and NKLD.

It belongs to the TRAFAC class translation factor GTPase superfamily. Classic translation factor GTPase family. PrfC subfamily.

It is found in the cytoplasm. Functionally, increases the formation of ribosomal termination complexes and stimulates activities of RF-1 and RF-2. It binds guanine nucleotides and has strong preference for UGA stop codons. It may interact directly with the ribosome. The stimulation of RF-1 and RF-2 is significantly reduced by GTP and GDP, but not by GMP. This Haemophilus influenzae (strain PittGG) protein is Peptide chain release factor 3.